Here is a 140-residue protein sequence, read N- to C-terminus: MQRQRGFTLLEIMVVIVILGVLASLVVPNLMGNKEKADRQKVVSDLVALEGALDMYKLDNSRYPTTEQGLQALVSAPSAEPHARNYPEGGYIRRLPQDPWGSDYQLLSPGQHGQVDIFSLGPDGVPESNDDIGNWTIGKK.

Residues 1–6 constitute a propeptide, leader sequence; sequence MQRQRG. Phenylalanine 7 bears the N-methylphenylalanine mark. A helical membrane pass occupies residues 7–27; it reads FTLLEIMVVIVILGVLASLVV. A disordered region spans residues 120-140; sequence LGPDGVPESNDDIGNWTIGKK.

It belongs to the GSP G family. Type II secretion system is composed of four main components: the outer membrane complex, the inner membrane complex, the cytoplasmic secretion ATPase and the periplasm-spanning pseudopilus. Forms homomultimers. In terms of processing, cleaved by the prepilin peptidase. Post-translationally, methylated by prepilin peptidase at the amino group of the N-terminal phenylalanine once the leader sequence is cleaved.

The protein localises to the cell inner membrane. In terms of biological role, core component of the type II secretion system required for the energy-dependent secretion of extracellular factors such as proteases and toxins from the periplasm. Pseudopilin (pilin-like) protein that polymerizes to form the pseudopilus. Further polymerization triggers pseudopilus growth. The protein is Type II secretion system core protein G (pulG) of Klebsiella pneumoniae.